The primary structure comprises 297 residues: MNIIGSDRNTNIGGFMWKFKELIRDKTFRRWALSIILTIPTSVSTFISFLDLDARCRLIILLILVGLSLVIIIVQFIRLLFMNNITLNLNGSEVEIKKGDIFEVPRNNYKVIAFNEYFDTQVDDVIIARETLNGQYIKRYYSHQDITELDQKIKDDVKLKIEEKNVERPFGGKTTRYSLGSVFKDMDFFLVAFSKFDRENRAQLKLNEYASCMLNVWNEINTLHASKEVFIPLLGSGITRHVDSDVGVNELLHIMLWTFQISKVKFREPAKVTILLYKNDHKKINFYKLKEFEKNGL.

The next 2 helical transmembrane spans lie at 32-52 and 57-77; these read ALSIILTIPTSVSTFISFLDL and RLIILLILVGLSLVIIIVQFI.

The protein localises to the cell membrane. Its activity is regulated as follows. Activated by a signal molecule generated by ThsB. Probable membrane protein component of the Thoeris antiviral defense system, composed of ThsA and ThsB. Expression of ThsA and ThsB in B.subtilis (strain BEST7003) confers resistance to phages SBSphiC, SBSphiJ and SPO1. Activation by a signal generated by ThsB leads to phage resistance. This Bacillus amyloliquefaciens (strain Y2) (Bacillus amyloliquefaciens subsp. plantarum (strain B9601-Y2)) protein is Thoeris protein ThsA.